Here is a 312-residue protein sequence, read N- to C-terminus: Glyoxylate/hydroxypyruvate reductase A (312 aa).

Residue Arg-227 is part of the active site. His-275 (proton donor) is an active-site residue.

The protein belongs to the D-isomer specific 2-hydroxyacid dehydrogenase family. GhrA subfamily.

Its subcellular location is the cytoplasm. The catalysed reaction is glycolate + NADP(+) = glyoxylate + NADPH + H(+). The enzyme catalyses (R)-glycerate + NAD(+) = 3-hydroxypyruvate + NADH + H(+). It catalyses the reaction (R)-glycerate + NADP(+) = 3-hydroxypyruvate + NADPH + H(+). Catalyzes the NADPH-dependent reduction of glyoxylate and hydroxypyruvate into glycolate and glycerate, respectively. The protein is Glyoxylate/hydroxypyruvate reductase A of Escherichia coli (strain ATCC 8739 / DSM 1576 / NBRC 3972 / NCIMB 8545 / WDCM 00012 / Crooks).